The primary structure comprises 392 residues: 23S rRNA (uracil(747)-C(5))-methyltransferase RlmC (392 aa).

[4Fe-4S] cluster-binding residues include Cys-4, Cys-12, Cys-15, and Cys-93. The S-adenosyl-L-methionine site is built by Gln-218, Phe-247, Glu-275, and Asn-321. Cys-348 (nucleophile) is an active-site residue.

It belongs to the class I-like SAM-binding methyltransferase superfamily. RNA M5U methyltransferase family. RlmC subfamily.

It carries out the reaction uridine(747) in 23S rRNA + S-adenosyl-L-methionine = 5-methyluridine(747) in 23S rRNA + S-adenosyl-L-homocysteine + H(+). In terms of biological role, catalyzes the formation of 5-methyl-uridine at position 747 (m5U747) in 23S rRNA. The chain is 23S rRNA (uracil(747)-C(5))-methyltransferase RlmC from Haemophilus influenzae (strain PittEE).